Reading from the N-terminus, the 577-residue chain is Isocitrate dehydrogenase kinase/phosphatase (577 aa).

Residues 318 to 324 (APGVRGM) and lysine 339 contribute to the ATP site. Aspartate 374 is a catalytic residue.

It belongs to the AceK family.

It localises to the cytoplasm. The enzyme catalyses L-seryl-[isocitrate dehydrogenase] + ATP = O-phospho-L-seryl-[isocitrate dehydrogenase] + ADP + H(+). In terms of biological role, bifunctional enzyme which can phosphorylate or dephosphorylate isocitrate dehydrogenase (IDH) on a specific serine residue. This is a regulatory mechanism which enables bacteria to bypass the Krebs cycle via the glyoxylate shunt in response to the source of carbon. When bacteria are grown on glucose, IDH is fully active and unphosphorylated, but when grown on acetate or ethanol, the activity of IDH declines drastically concomitant with its phosphorylation. The sequence is that of Isocitrate dehydrogenase kinase/phosphatase from Pseudomonas aeruginosa (strain LESB58).